We begin with the raw amino-acid sequence, 312 residues long: Taste receptor type 2 member 103 (312 aa).

The Extracellular portion of the chain corresponds to 1 to 16 (MVVTMRAALRLMLIST). The chain crosses the membrane as a helical span at residues 17–37 (VSLELIIGILANVFIALVNII). Topologically, residues 38–65 (DWIKRGKISAVDKIYMGLAISRTAFVLS) are cytoplasmic. Residues 66–86 (VITGFLIAFLDPASLGIGIMI) traverse the membrane as a helical segment. Topologically, residues 87–92 (RLLTMS) are extracellular. The chain crosses the membrane as a helical span at residues 93–113 (WTVTNHFSVWFATCLSIFYFL). Over 114–133 (KITNFSNTVFLALKWKVKKV) the chain is Cytoplasmic. Residues 134–154 (VSVTLVVSLIILFINVIVIHI) traverse the membrane as a helical segment. The Extracellular segment spans residues 155 to 184 (YTDRFQVNMVQKCGANNTLRAYGLFLSIST). Asn-170 carries an N-linked (GlcNAc...) asparagine glycan. Residues 185–205 (VFTFIPFTASLTMFLLLIFSL) form a helical membrane-spanning segment. The Cytoplasmic portion of the chain corresponds to 206–229 (WRHLKTMHHNATGSRDVSTVAHIK). The helical transmembrane segment at 230–250 (GLQTVVAFLLLYTVFAMSLFS) threads the bilayer. The Extracellular portion of the chain corresponds to 251–264 (QSLSIDAQHTNLLS). A helical membrane pass occupies residues 265–285 (HFLRCIGVAFPSGHSCALILG). At 286–312 (NNKLRQASLSVIFWLRCKYKHTENQGP) the chain is on the cytoplasmic side.

This sequence belongs to the G-protein coupled receptor T2R family.

The protein localises to the membrane. Functionally, gustducin-coupled receptor implicated in the perception of bitter compounds in the oral cavity and the gastrointestinal tract. Signals through PLCB2 and the calcium-regulated cation channel TRPM5. This is Taste receptor type 2 member 103 from Rattus norvegicus (Rat).